The sequence spans 341 residues: Sphingolipid long chain base-responsive protein LSP1 (341 aa).

The segment covering 1 to 11 (MHRTYSLRNQR) has biased composition (polar residues). A disordered region spans residues 1–32 (MHRTYSLRNQRAPTAAELQAPPPPPSSTKSKF). Thr233 carries the post-translational modification Phosphothreonine. 2 stretches are compositionally biased toward acidic residues: residues 282–294 (YEDEDGEEEEEPE) and 305–323 (VEEEEVEWTTEVPVDDEAH). Residues 282-341 (YEDEDGEEEEEPEIQNGDIPGQVVEEEEVEWTTEVPVDDEAHEADHHVSQNGHTSGSENI) form a disordered region. Over residues 330 to 341 (SQNGHTSGSENI) the composition is skewed to polar residues.

Phosphorylated by PKH1 and PKH2. Phosphorylation is stimulated by sphingolipid long chain bases (LCBs). Post-translationally, N-glycosylated.

It localises to the cytoplasm. Its subcellular location is the cell cortex. Functionally, together with PIL1, main component of eisosomes, structures at the cell periphery underneath the plasma membrane that mark the site of endocytosis. Negative regulator of cell wall integrity (CWI) in unstressed cells, probably by inhibiting protein kinase PKH1/PHK2 activity and regulating their downstream CWI pathways PKC1-MAP kinase pathway and protein kinase YPK1 pathway. Activity may be regulated by the transient increase of sphingolipid long chain bases (LCBs) during heat stress. The sequence is that of Sphingolipid long chain base-responsive protein LSP1 (LSP1) from Saccharomyces cerevisiae (strain ATCC 204508 / S288c) (Baker's yeast).